The chain runs to 469 residues: MKVCQKYTAVLLVWLSAVVSMRAGAVDLPDFTGLVERTSPAVVNISTVRKVGDDSAQYYFGGPEQDQIPEFFRHFFGDPYRRRGPQEAQSTGSGFIVSKDGYILTNNHVVAGADEIFVRLMDRRELTAKLIGSDEKSDLAVLKVEADDLPVLNLGKSSELKVGEWVVAIGSPFGFEYTVTAGIVSAKGRSLPNENYVPFIQTDVAINPGNSGGPLFNLEGEVVGINSQIYTRSGGFMGVSFAIPIDVALDVMNQLKDTGAVKRGWLGVLIQEVNKDLAESFNLNKPRGALVAQVMKGSPADKAGLQPGDVIVSYNGNEIGLSSELPHLVGRTSPGQKASMKVVRRGDEMDVAVEIGQLPADDNGVASVPAGQTAPQNNALNLQVRDLTDEEKESMQVAGGVMVAQVFPGPAATAGIQPNDVISSINNKDVETVAQFHEVVEKLPVGKSLPVLIIRQGNPAFIVLKLNNK.

The N-terminal stretch at 1–25 (MKVCQKYTAVLLVWLSAVVSMRAGA) is a signal peptide. Active-site charge relay system residues include H108, D138, and S211. Residues 209–211 (GNS) and 266–270 (LGVLI) each bind substrate. 2 consecutive PDZ domains span residues 255–346 (LKDT…VRRG) and 352–457 (AVEI…IRQG).

The protein belongs to the peptidase S1C family.

It is found in the periplasm. The enzyme catalyses Acts on substrates that are at least partially unfolded. The cleavage site P1 residue is normally between a pair of hydrophobic residues, such as Val-|-Val.. Might be efficient in the degradation of transiently denatured and unfolded proteins which accumulate in the periplasm following stress conditions. The protein is Probable periplasmic serine endoprotease DegP-like (mucD) of Hahella chejuensis (strain KCTC 2396).